The chain runs to 822 residues: Probable alpha,alpha-trehalose-phosphate synthase [UDP-forming] 2 (822 aa).

The interval 12–479 (PRLLVVANRL…GLDFMSELNG (468 aa)) is glycosyltransferase.

The protein in the N-terminal section; belongs to the glycosyltransferase 20 family. This sequence in the C-terminal section; belongs to the trehalose phosphatase family.

The enzyme catalyses D-glucose 6-phosphate + UDP-alpha-D-glucose = alpha,alpha-trehalose 6-phosphate + UDP + H(+). This Arabidopsis thaliana (Mouse-ear cress) protein is Probable alpha,alpha-trehalose-phosphate synthase [UDP-forming] 2 (TPS2).